We begin with the raw amino-acid sequence, 237 residues long: Casparian strip membrane protein 2 (237 aa).

The tract at residues 1–48 (MSGSDTSGSVHVDEHGHGHGKASSSYDGAGAPAPAPAPFQGHRKAGSG) is disordered. The Cytoplasmic portion of the chain corresponds to 1 to 69 (MSGSDTSGSV…GSGGDGLRRC (69 aa)). The helical transmembrane segment at 70–90 (LGLIDFVLRVAAFGPTLAAAI) threads the bilayer. At 91-117 (SIGTSDERLSVFTNYFQFRARFDDFPA) the chain is on the extracellular side. Residues 118-138 (FEFFIVANAIAAGYMVLSLPF) traverse the membrane as a helical segment. Residues 139 to 152 (SAATIMSSKATGVK) are Cytoplasmic-facing. The chain crosses the membrane as a helical span at residues 153 to 173 (LLLLICDTIMVGLLTAAASAA). At 174–205 (AAMVYVAHEGNLRANWVPICLQFHGFCQRTSG) the chain is on the extracellular side. The helical transmembrane segment at 206 to 226 (AVIASFLAVFVLMVLIVMAAF) threads the bilayer. Over 227 to 237 (TMPRRTHHTAS) the chain is Cytoplasmic.

Belongs to the Casparian strip membrane proteins (CASP) family. In terms of assembly, homodimer and heterodimers.

The protein resides in the cell membrane. Regulates membrane-cell wall junctions and localized cell wall deposition. Required for establishment of the Casparian strip membrane domain (CSD) and the subsequent formation of Casparian strips, a cell wall modification of the root endodermis that determines an apoplastic barrier between the intraorganismal apoplasm and the extraorganismal apoplasm and prevents lateral diffusion. The polypeptide is Casparian strip membrane protein 2 (Oryza sativa subsp. japonica (Rice)).